The sequence spans 646 residues: Acetyl-coenzyme A synthetase (646 aa).

Residues 190-193 (RAGK) and Thr309 each bind CoA. ATP-binding positions include 385–387 (GEP), 409–414 (DTWWQT), Asp498, and Arg513. Ser521 provides a ligand contact to CoA. Residue Arg524 participates in ATP binding. Mg(2+)-binding residues include Val535, His537, and Val540. Position 582 (Arg582) interacts with CoA. Lys607 carries the post-translational modification N6-acetyllysine.

This sequence belongs to the ATP-dependent AMP-binding enzyme family. It depends on Mg(2+) as a cofactor. Post-translationally, acetylated. Deacetylation by the SIR2-homolog deacetylase activates the enzyme.

The enzyme catalyses acetate + ATP + CoA = acetyl-CoA + AMP + diphosphate. Catalyzes the conversion of acetate into acetyl-CoA (AcCoA), an essential intermediate at the junction of anabolic and catabolic pathways. AcsA undergoes a two-step reaction. In the first half reaction, AcsA combines acetate with ATP to form acetyl-adenylate (AcAMP) intermediate. In the second half reaction, it can then transfer the acetyl group from AcAMP to the sulfhydryl group of CoA, forming the product AcCoA. The sequence is that of Acetyl-coenzyme A synthetase from Pseudoalteromonas atlantica (strain T6c / ATCC BAA-1087).